A 1213-amino-acid chain; its full sequence is Oligopeptidase PhomG' (1213 aa).

His447 lines the Zn(2+) pocket. The active site involves Glu448. The Zn(2+) site is built by His451 and His454.

It belongs to the peptidase M3 family. In terms of assembly, monomer. It depends on Zn(2+) as a cofactor.

It participates in mycotoxin biosynthesis. Functionally, oligopeptidase; part of the gene cluster that mediates the biosynthesis of the phomopsins, a group of hexapeptide mycotoxins which infects lupins and causes lupinosis disease in livestock. Within the pathway, phomG and phomG' are probably involved in the processing of the phomA and phomA' precursors. The pathway starts with the processing of the precursor phomA by several endopeptidases including kexin proteases as well as the cluster-specific S41 family peptidase phomP1 and the oligopeptidase phomG to produce 10 identical copies of the hexapeptide Tyr-Val-Ile-Pro-Ile-Asp. After being excised from the precursor peptide, the core peptides are cyclized and modified post-translationally by enzymes encoded within the gene cluster. The timing and order of proteolysis of the phomA precursor and PTMs are still unknown. Two tyrosinase-like enzymes, phomQ1 and phomQ2, catalyze the chlorination and hydroxylation of Tyr, respectively. PhomYb, is proposed to be involved in the construction of the macrocyclic structure. The other 4 ustYa family proteins may be involved in PTMs that generate the unique structure of phomopsin A. PhomYa is required for the hydroxylation of C-beta of Tyr. PhomYc, phomYd, and phomYe are responsible for the biosynthesis of 2,3-dehydroisoleucine (dIle), 2,3-dehydroaspartic acid (dAsp), and 3,4-dehydroproline (dPro), respectively. While dIle formation by phomYc is indispensable for the installation of dAsp by phomYd, the order of the other PTMs have not been elucidated yet. Most of the biosynthetic enzymes likely have broad substrate specificity, and thus, there might be a metabolic grid from a precursor to phomopsin A. The enzyme(s) responsible for the biosynthesis of 3,4-dehydrovaline (dVal) have also not been identified yet. Finally, phomM acts as an S-adenosylmethionine-dependent alpha-N-methyltransferase that catalyzes two successive N-methylation reactions, converting N-desmethyl-phomopsin A to phomopsin A and phomopsin A further to an N,N-dimethylated congener called phomopsin E. This is Oligopeptidase PhomG' from Diaporthe leptostromiformis (Lupinosis disease fungus).